The primary structure comprises 384 residues: Chaperone protein DnaJ (384 aa).

Residues 5–70 (DYYEVLGVAR…QKKAAYDRFG (66 aa)) form the J domain. The CR-type zinc finger occupies 138–216 (GAQKTINVPG…CRGAGRVQKE (79 aa)). Positions 151, 154, 168, 171, 190, 193, 204, and 207 each coordinate Zn(2+). CXXCXGXG motif repeat units follow at residues 151–158 (CAACNGTG), 168–175 (CPTCSGMG), 190–197 (CPTCSGHG), and 204–211 (CQECRGAG). The tract at residues 300 to 322 (KVPPGTQSGKQLRLRGKGMPPLR) is disordered.

It belongs to the DnaJ family. As to quaternary structure, homodimer. It depends on Zn(2+) as a cofactor.

The protein localises to the cytoplasm. Functionally, participates actively in the response to hyperosmotic and heat shock by preventing the aggregation of stress-denatured proteins and by disaggregating proteins, also in an autonomous, DnaK-independent fashion. Unfolded proteins bind initially to DnaJ; upon interaction with the DnaJ-bound protein, DnaK hydrolyzes its bound ATP, resulting in the formation of a stable complex. GrpE releases ADP from DnaK; ATP binding to DnaK triggers the release of the substrate protein, thus completing the reaction cycle. Several rounds of ATP-dependent interactions between DnaJ, DnaK and GrpE are required for fully efficient folding. Also involved, together with DnaK and GrpE, in the DNA replication of plasmids through activation of initiation proteins. This chain is Chaperone protein DnaJ, found in Paracoccus denitrificans (strain Pd 1222).